The primary structure comprises 61 residues: uncharacterized protein (61 aa).

Positions 10 to 61 form a coiled coil; that stretch reads YEEENDNEDFEEEVELSREDLNQIINELAPFLIKLLTDLTELTQKKEESENE.

This is an uncharacterized protein from Acidianus bottle-shaped virus (isolate Italy/Pozzuoli) (ABV).